The sequence spans 305 residues: Glycine--tRNA ligase alpha subunit (305 aa).

The protein belongs to the class-II aminoacyl-tRNA synthetase family. Tetramer of two alpha and two beta subunits.

It localises to the cytoplasm. It carries out the reaction tRNA(Gly) + glycine + ATP = glycyl-tRNA(Gly) + AMP + diphosphate. The chain is Glycine--tRNA ligase alpha subunit from Vibrio parahaemolyticus serotype O3:K6 (strain RIMD 2210633).